The sequence spans 827 residues: MESSSRIFVKNLPPTITEAEFRKHFSAEGRQVTDVKLIPARHIGFVGYKSAEDAARAVKYFNRSFIRMSRISVDIAKPIADSKPQHKSPSKGSSKDADPKNAPKVLPPNTKVTAAAVPKVEAAPDAPKRKLDVLDEADPKLQEYLDVMGAHPSKKMRNAEGLPTTVDEVLAPAVPAGLEDGESDDEYEDIPSRTHNQSHTADQEMVDAPLAASAEPSESAPPVSLDATDDDWLRSRTNRLLDLVDPEDAAFALRPAASGSAAVSVPSTSVENTASAKPEEHPAEDSREMAATSTHDPESAISLIEKTSRLFLRNLSYTVTEDDVREHFAKFGILVEVHVPLDSKGHSKGFAMIRYEKPASALAAFQTDGTVFQGRIVHILPAAAKRENKLDEFALSKLPLKKQQLLRKKAEAASSTFNWNSLFMSQDAVNTAMAERLGVSKAELLDPTDASAAVKQAVAETTVIQEAKQYFAANGVNIEAFKTQQRGDTTILVKNIKNTTIEELRTLFEEHGTVLRVLMPPSGTIAIVQFAQPVQCRTAFARKAYSRFKDSVLFLEKGPKGLFTDNVAVPTDARPAGVQKPSVADLLERDDAEEQLETSSLFVRNLNFSTTSQGLTDAFKHLDGFVQAKVKTKTDPKKPGQVLSMGFGFVAFRTKDQAQAALKVMDGQVLDAHKISVKASHRGLDAAEERRREDMAKKAANQGTKLVVKNLPFEVTKKEVRTLFSAYGKLVALRIPKKFNQSSRGFAFAEFSTAKEALNAFNSLKDTHILGRRLVIDFAQAEDIDPEDQIAAMEKKTRAQVNKVALQQLTGTGRAKVTIGDNDEDEV.

One can recognise an RRM 1 domain in the interval 5–78 (SRIFVKNLPP…SRISVDIAKP (74 aa)). 3 disordered regions span residues 77–116 (KPIA…TAAA), 176–230 (AGLE…ATDD), and 256–299 (AASG…DPES). Acidic residues predominate over residues 179 to 189 (EDGESDDEYED). Low complexity-rich tracts occupy residues 208–225 (APLA…PVSL) and 256–270 (AASG…STSV). Positions 277–288 (KPEEHPAEDSRE) are enriched in basic and acidic residues. 4 RRM domains span residues 308–384 (SRLF…PAAA), 489–560 (TTIL…KGPK), 599–682 (SSLF…ASHR), and 704–781 (TKLV…FAQA).

The protein belongs to the RRM MRD1 family.

Its subcellular location is the nucleus. In terms of biological role, involved in pre-rRNA processing. This Neurospora crassa (strain ATCC 24698 / 74-OR23-1A / CBS 708.71 / DSM 1257 / FGSC 987) protein is Multiple RNA-binding domain-containing protein 1 (mrd-1).